We begin with the raw amino-acid sequence, 168 residues long: Plastocyanin, chloroplastic (168 aa).

The transit peptide at 1–69 directs the protein to the chloroplast; that stretch reads MATVTSTTVA…SAVLASNALA (69 aa). A Plastocyanin-like domain is found at 70 to 168; it reads VEVLLGASDG…AGMVGQVTVN (99 aa). Cu cation is bound by residues histidine 106, cysteine 153, histidine 156, and methionine 161.

This sequence belongs to the plastocyanin family. Cu(2+) is required as a cofactor.

The protein localises to the plastid. It is found in the chloroplast thylakoid membrane. Its function is as follows. Participates in electron transfer between P700 and the cytochrome b6-f complex in photosystem I. This chain is Plastocyanin, chloroplastic (PETE), found in Pisum sativum (Garden pea).